The chain runs to 190 residues: Ribose 1,5-bisphosphate phosphokinase PhnN (190 aa).

An ATP-binding site is contributed by 10 to 17; sequence GPSGSGKD.

Belongs to the ribose 1,5-bisphosphokinase family.

The enzyme catalyses alpha-D-ribose 1,5-bisphosphate + ATP = 5-phospho-alpha-D-ribose 1-diphosphate + ADP. The protein operates within metabolic intermediate biosynthesis; 5-phospho-alpha-D-ribose 1-diphosphate biosynthesis; 5-phospho-alpha-D-ribose 1-diphosphate from D-ribose 5-phosphate (route II): step 3/3. Catalyzes the phosphorylation of ribose 1,5-bisphosphate to 5-phospho-D-ribosyl alpha-1-diphosphate (PRPP). The chain is Ribose 1,5-bisphosphate phosphokinase PhnN from Pseudomonas fluorescens (strain SBW25).